The sequence spans 29 residues: Cyclotide mden-F (29 aa).

A cross-link (cyclopeptide (Gly-Asn)) is located at residues Gly-1–Asn-29. 3 disulfide bridges follow: Cys-5–Cys-19, Cys-9–Cys-21, and Cys-14–Cys-26.

Belongs to the cyclotide family. This is a cyclic peptide.

Probably participates in a plant defense mechanism. The sequence is that of Cyclotide mden-F from Melicytus dentatus (Tree violet).